We begin with the raw amino-acid sequence, 389 residues long: Chalcone synthase 4-1 (389 aa).

Cys164 is an active-site residue.

It belongs to the thiolase-like superfamily. Chalcone/stilbene synthases family.

The enzyme catalyses (E)-4-coumaroyl-CoA + 3 malonyl-CoA + 3 H(+) = 2',4,4',6'-tetrahydroxychalcone + 3 CO2 + 4 CoA. The protein operates within secondary metabolite biosynthesis; flavonoid biosynthesis. The primary product of this enzyme is 4,2',4',6'-tetrahydroxychalcone (also termed naringenin-chalcone or chalcone) which can under specific conditions spontaneously isomerize into naringenin. This Medicago sativa (Alfalfa) protein is Chalcone synthase 4-1 (CHS4-1).